The chain runs to 114 residues: uncharacterized protein (114 aa).

Residues 13 to 30 form a helical membrane-spanning segment; it reads LYISAAGIASIYVVKTIV.

It localises to the mitochondrion outer membrane. This is an uncharacterized protein from Saccharomyces cerevisiae (strain ATCC 204508 / S288c) (Baker's yeast).